A 70-amino-acid chain; its full sequence is Small ribosomal subunit protein bS21B (70 aa).

This sequence belongs to the bacterial ribosomal protein bS21 family.

The sequence is that of Small ribosomal subunit protein bS21B (rpsU2) from Rhizobium meliloti (strain 1021) (Ensifer meliloti).